A 505-amino-acid chain; its full sequence is Deoxyguanosinetriphosphate triphosphohydrolase (505 aa).

The HD domain maps to 66-273; it reads RLTHSMEVQQ…MEAADDISYC (208 aa).

The protein belongs to the dGTPase family. Type 1 subfamily. Homotetramer. Mg(2+) is required as a cofactor.

It catalyses the reaction dGTP + H2O = 2'-deoxyguanosine + triphosphate + H(+). Functionally, dGTPase preferentially hydrolyzes dGTP over the other canonical NTPs. This is Deoxyguanosinetriphosphate triphosphohydrolase from Salmonella arizonae (strain ATCC BAA-731 / CDC346-86 / RSK2980).